The sequence spans 312 residues: MDDKEILLANPRGFCAGVERAIEIVEQALARFGAPIYVRHEVVHNKFVVDGLRAKGAIFVEELDEVPTGQTVIFSAHGVPQAVRSEAERRGLRVFDATCPLVTKVHLEVARMREQGREIVMIGHKGHPEVEGTMGQVGDGIHLVEVVQDVANIEVADPQQLAYVTQTTLSVDDAATLVAALRARFPAIVGPKKDDICYATQNRQDAVKFMAPRVDVVFVVGSRNSSNSNRLREVAELLGVPAYLVDNAEGIEPIWLEDKKRVGVTAGASAPEVLVDAVVERLKELGASSVRTLEGVPERVTFPLPRELQTPD.

Cys15 is a [4Fe-4S] cluster binding site. Positions 44 and 77 each coordinate (2E)-4-hydroxy-3-methylbut-2-enyl diphosphate. 2 residues coordinate dimethylallyl diphosphate: His44 and His77. 2 residues coordinate isopentenyl diphosphate: His44 and His77. Cys99 provides a ligand contact to [4Fe-4S] cluster. Position 127 (His127) interacts with (2E)-4-hydroxy-3-methylbut-2-enyl diphosphate. Position 127 (His127) interacts with dimethylallyl diphosphate. His127 lines the isopentenyl diphosphate pocket. Glu129 acts as the Proton donor in catalysis. Thr167 contacts (2E)-4-hydroxy-3-methylbut-2-enyl diphosphate. Cys197 is a binding site for [4Fe-4S] cluster. Residues Ser225, Ser226, Asn227, and Ser269 each contribute to the (2E)-4-hydroxy-3-methylbut-2-enyl diphosphate site. Positions 225, 226, 227, and 269 each coordinate dimethylallyl diphosphate. The isopentenyl diphosphate site is built by Ser225, Ser226, Asn227, and Ser269.

This sequence belongs to the IspH family. [4Fe-4S] cluster is required as a cofactor.

The enzyme catalyses isopentenyl diphosphate + 2 oxidized [2Fe-2S]-[ferredoxin] + H2O = (2E)-4-hydroxy-3-methylbut-2-enyl diphosphate + 2 reduced [2Fe-2S]-[ferredoxin] + 2 H(+). It carries out the reaction dimethylallyl diphosphate + 2 oxidized [2Fe-2S]-[ferredoxin] + H2O = (2E)-4-hydroxy-3-methylbut-2-enyl diphosphate + 2 reduced [2Fe-2S]-[ferredoxin] + 2 H(+). Its pathway is isoprenoid biosynthesis; dimethylallyl diphosphate biosynthesis; dimethylallyl diphosphate from (2E)-4-hydroxy-3-methylbutenyl diphosphate: step 1/1. The protein operates within isoprenoid biosynthesis; isopentenyl diphosphate biosynthesis via DXP pathway; isopentenyl diphosphate from 1-deoxy-D-xylulose 5-phosphate: step 6/6. Functionally, catalyzes the conversion of 1-hydroxy-2-methyl-2-(E)-butenyl 4-diphosphate (HMBPP) into a mixture of isopentenyl diphosphate (IPP) and dimethylallyl diphosphate (DMAPP). Acts in the terminal step of the DOXP/MEP pathway for isoprenoid precursor biosynthesis. In Aromatoleum aromaticum (strain DSM 19018 / LMG 30748 / EbN1) (Azoarcus sp. (strain EbN1)), this protein is 4-hydroxy-3-methylbut-2-enyl diphosphate reductase.